The chain runs to 410 residues: Cysteine desulfurase IscS (410 aa).

Residues 80–81 (AT), asparagine 160, glutamine 188, and 208–210 (SGH) each bind pyridoxal 5'-phosphate. Lysine 211 bears the N6-(pyridoxal phosphate)lysine mark. Threonine 248 is a binding site for pyridoxal 5'-phosphate. The Cysteine persulfide intermediate role is filled by cysteine 334. Cysteine 334 is a [2Fe-2S] cluster binding site.

The protein belongs to the class-V pyridoxal-phosphate-dependent aminotransferase family. NifS/IscS subfamily. As to quaternary structure, homodimer. Forms a heterotetramer with IscU, interacts with other sulfur acceptors. The cofactor is pyridoxal 5'-phosphate.

It is found in the cytoplasm. The catalysed reaction is (sulfur carrier)-H + L-cysteine = (sulfur carrier)-SH + L-alanine. It functions in the pathway cofactor biosynthesis; iron-sulfur cluster biosynthesis. Master enzyme that delivers sulfur to a number of partners involved in Fe-S cluster assembly, tRNA modification or cofactor biosynthesis. Catalyzes the removal of elemental sulfur atoms from cysteine to produce alanine. Functions as a sulfur delivery protein for Fe-S cluster synthesis onto IscU, an Fe-S scaffold assembly protein, as well as other S acceptor proteins. The sequence is that of Cysteine desulfurase IscS from Rickettsia typhi (strain ATCC VR-144 / Wilmington).